The chain runs to 85 residues: Large ribosomal subunit protein bL27 (85 aa).

A disordered region spans residues 1–21 (MAHKKAGGSTRNGRDSESKRL).

The protein belongs to the bacterial ribosomal protein bL27 family.

The sequence is that of Large ribosomal subunit protein bL27 from Ectopseudomonas mendocina (strain ymp) (Pseudomonas mendocina).